The primary structure comprises 229 residues: Uracil-DNA glycosylase (229 aa).

Asp-65 acts as the Proton acceptor in catalysis.

The protein belongs to the uracil-DNA glycosylase (UDG) superfamily. UNG family.

The protein resides in the cytoplasm. It carries out the reaction Hydrolyzes single-stranded DNA or mismatched double-stranded DNA and polynucleotides, releasing free uracil.. Excises uracil residues from the DNA which can arise as a result of misincorporation of dUMP residues by DNA polymerase or due to deamination of cytosine. This is Uracil-DNA glycosylase from Latilactobacillus sakei subsp. sakei (strain 23K) (Lactobacillus sakei subsp. sakei).